Consider the following 3658-residue polypeptide: E3 ubiquitin-protein ligase UPL2 (3658 aa).

Positions 884–893 are enriched in basic and acidic residues; it reads DEKKSVDRAS. The interval 884–914 is disordered; sequence DEKKSVDRASDNSVSASSSTAERESDEDSSN. A compositionally biased stretch (low complexity) spans 894 to 903; the sequence is DNSVSASSST. The 42-residue stretch at 1271–1312 folds into the UBA domain; that stretch reads QPDEAIVGMIVEMGFSRSRAEDALRRVGTNSVEMAMDWLFTN. Residues 1318–1337 enclose the UIM domain; sequence QEDDELAQALALSLGNSSET. Disordered regions lie at residues 1331 to 1360, 1702 to 1733, 2004 to 2038, 2052 to 2072, 2113 to 2204, 2293 to 2313, 2417 to 2487, 2503 to 2591, and 2958 to 2987; these read LGNS…KEPP, VSGS…SKSH, AEQL…VDEL, VDNG…RGSS, HVED…DDMV, PLFS…SAGS, ERET…EGGG, SAQG…PEVN, and SPSS…AESE. A compositionally biased stretch (basic and acidic residues) spans 1338–1347; the sequence is PKLEDTEKPV. Residues 2007–2027 are compositionally biased toward basic and acidic residues; that stretch reads LKSEVPNEQKNTDSDERHDSH. The span at 2028 to 2038 shows a compositional bias: polar residues; sequence GTSTSTEVDEL. Composition is skewed to acidic residues over residues 2117-2144 and 2156-2204; these read RADD…DSVE and DVED…DDMV. Polar residues predominate over residues 2297–2313; that stretch reads RPSQTGNTASVSASAGS. The segment covering 2422-2431 has biased composition (low complexity); sequence TTEVQEQQQP. Over residues 2503–2518 the composition is skewed to polar residues; that stretch reads SAQGQSDTSGIQNVSV. The residue at position 2582 (serine 2582) is a Phosphoserine. In terms of domain architecture, HECT spans 3317-3658; it reads SPQDLKGRLN…HEANEGFGFA (342 aa). Cysteine 3625 acts as the Glycyl thioester intermediate in catalysis.

The protein belongs to the UPL family. TOM1/PTR1 subfamily. As to expression, widely expressed. Expressed in root, stem, cauline and rosette leaf, seedling and flower (at protein level).

It catalyses the reaction S-ubiquitinyl-[E2 ubiquitin-conjugating enzyme]-L-cysteine + [acceptor protein]-L-lysine = [E2 ubiquitin-conjugating enzyme]-L-cysteine + N(6)-ubiquitinyl-[acceptor protein]-L-lysine.. It participates in protein modification; protein ubiquitination. Functionally, probable E3 ubiquitin-protein ligase which mediates ubiquitination and subsequent proteasomal degradation of target proteins. The polypeptide is E3 ubiquitin-protein ligase UPL2 (UPL2) (Arabidopsis thaliana (Mouse-ear cress)).